The primary structure comprises 443 residues: Cell division protein FtsA (443 aa).

The protein belongs to the FtsA/MreB family. In terms of assembly, self-interacts. Interacts with FtsZ.

It localises to the cell inner membrane. Functionally, cell division protein that is involved in the assembly of the Z ring. May serve as a membrane anchor for the Z ring. The protein is Cell division protein FtsA of Agrobacterium fabrum (strain C58 / ATCC 33970) (Agrobacterium tumefaciens (strain C58)).